The sequence spans 140 residues: MALLTVNLNVVSAEESLFSGSIKSLQITGSEGELGIMPGHAPLLTSLKPGMALITKKDGSEEVIYLSGGMLEVQPNNVTVLADIATRAADLDEQAALEAKQRAEENMNANGADVDFAVAAAQLARAVAQLRVIQATSKHN.

Belongs to the ATPase epsilon chain family. F-type ATPases have 2 components, CF(1) - the catalytic core - and CF(0) - the membrane proton channel. CF(1) has five subunits: alpha(3), beta(3), gamma(1), delta(1), epsilon(1). CF(0) has three main subunits: a, b and c.

The protein localises to the cell inner membrane. In terms of biological role, produces ATP from ADP in the presence of a proton gradient across the membrane. This Colwellia maris protein is ATP synthase epsilon chain.